The primary structure comprises 154 residues: Myoglobin (154 aa).

Positions 2 to 148 (GLSDAEWQLV…FRNDIAAQYK (147 aa)) constitute a Globin domain. A Phosphoserine modification is found at S4. H65 provides a ligand contact to nitrite. Position 65 (H65) interacts with O2. Position 68 is a phosphothreonine (T68). A heme b-binding site is contributed by H94.

This sequence belongs to the globin family. In terms of assembly, monomeric.

Its subcellular location is the cytoplasm. It is found in the sarcoplasm. It catalyses the reaction Fe(III)-heme b-[protein] + nitric oxide + H2O = Fe(II)-heme b-[protein] + nitrite + 2 H(+). It carries out the reaction H2O2 + AH2 = A + 2 H2O. Functionally, monomeric heme protein which primary function is to store oxygen and facilitate its diffusion within muscle tissues. Reversibly binds oxygen through a pentacoordinated heme iron and enables its timely and efficient release as needed during periods of heightened demand. Depending on the oxidative conditions of tissues and cells, and in addition to its ability to bind oxygen, it also has a nitrite reductase activity whereby it regulates the production of bioactive nitric oxide. Under stress conditions, like hypoxia and anoxia, it also protects cells against reactive oxygen species thanks to its pseudoperoxidase activity. This is Myoglobin (MB) from Oryctolagus cuniculus (Rabbit).